Here is a 169-residue protein sequence, read N- to C-terminus: S-ribosylhomocysteine lyase (169 aa).

Fe cation is bound by residues histidine 54, histidine 58, and cysteine 128.

This sequence belongs to the LuxS family. In terms of assembly, homodimer. The cofactor is Fe cation.

It catalyses the reaction S-(5-deoxy-D-ribos-5-yl)-L-homocysteine = (S)-4,5-dihydroxypentane-2,3-dione + L-homocysteine. Its function is as follows. Involved in the synthesis of autoinducer 2 (AI-2) which is secreted by bacteria and is used to communicate both the cell density and the metabolic potential of the environment. The regulation of gene expression in response to changes in cell density is called quorum sensing. Catalyzes the transformation of S-ribosylhomocysteine (RHC) to homocysteine (HC) and 4,5-dihydroxy-2,3-pentadione (DPD). In Sulfurovum sp. (strain NBC37-1), this protein is S-ribosylhomocysteine lyase.